The chain runs to 490 residues: Aspartyl/glutamyl-tRNA(Asn/Gln) amidotransferase subunit B (490 aa).

Belongs to the GatB/GatE family. GatB subfamily. As to quaternary structure, heterotrimer of A, B and C subunits.

The catalysed reaction is L-glutamyl-tRNA(Gln) + L-glutamine + ATP + H2O = L-glutaminyl-tRNA(Gln) + L-glutamate + ADP + phosphate + H(+). It carries out the reaction L-aspartyl-tRNA(Asn) + L-glutamine + ATP + H2O = L-asparaginyl-tRNA(Asn) + L-glutamate + ADP + phosphate + 2 H(+). In terms of biological role, allows the formation of correctly charged Asn-tRNA(Asn) or Gln-tRNA(Gln) through the transamidation of misacylated Asp-tRNA(Asn) or Glu-tRNA(Gln) in organisms which lack either or both of asparaginyl-tRNA or glutaminyl-tRNA synthetases. The reaction takes place in the presence of glutamine and ATP through an activated phospho-Asp-tRNA(Asn) or phospho-Glu-tRNA(Gln). The polypeptide is Aspartyl/glutamyl-tRNA(Asn/Gln) amidotransferase subunit B (Methylobacterium radiotolerans (strain ATCC 27329 / DSM 1819 / JCM 2831 / NBRC 15690 / NCIMB 10815 / 0-1)).